Here is a 55-residue protein sequence, read N- to C-terminus: uncharacterized protein (55 aa).

The segment covering 1-15 has biased composition (polar residues); that stretch reads MVGQEQLESSPLCQH. The disordered stretch occupies residues 1 to 26; the sequence is MVGQEQLESSPLCQHSDNETETKREC. Basic and acidic residues predominate over residues 16 to 26; it reads SDNETETKREC.

This is an uncharacterized protein from Escherichia coli (strain K12).